The chain runs to 217 residues: Probable transaldolase (217 aa).

Catalysis depends on Lys83, which acts as the Schiff-base intermediate with substrate.

It belongs to the transaldolase family. Type 3B subfamily.

It localises to the cytoplasm. It carries out the reaction D-sedoheptulose 7-phosphate + D-glyceraldehyde 3-phosphate = D-erythrose 4-phosphate + beta-D-fructose 6-phosphate. Its pathway is carbohydrate degradation; pentose phosphate pathway; D-glyceraldehyde 3-phosphate and beta-D-fructose 6-phosphate from D-ribose 5-phosphate and D-xylulose 5-phosphate (non-oxidative stage): step 2/3. Functionally, transaldolase is important for the balance of metabolites in the pentose-phosphate pathway. The protein is Probable transaldolase of Novosphingobium aromaticivorans (strain ATCC 700278 / DSM 12444 / CCUG 56034 / CIP 105152 / NBRC 16084 / F199).